Reading from the N-terminus, the 177-residue chain is MVLRIVASLLSIAALVLMAKDKQVVYLNLAGEELTLEAKHSYVEAFVYLVYSNGLVAIYCFLLVFALVFRLIDKAGCGKSAAWIIFLLDQGLAYVLLAAAAASTEVAYVAKRGNNKVGWSEVCSTFGHFCNLVGVSIVITFISVLAMATLSVMSARRLFKTYGPERKQISSNDAPAI.

Residues 1–21 (MVLRIVASLLSIAALVLMAKD) traverse the membrane as a helical segment. The Cytoplasmic portion of the chain corresponds to 22–48 (KQVVYLNLAGEELTLEAKHSYVEAFVY). The helical transmembrane segment at 49 to 69 (LVYSNGLVAIYCFLLVFALVF) threads the bilayer. The Extracellular portion of the chain corresponds to 70–80 (RLIDKAGCGKS). Residues 81 to 101 (AAWIIFLLDQGLAYVLLAAAA) form a helical membrane-spanning segment. Topologically, residues 102–131 (ASTEVAYVAKRGNNKVGWSEVCSTFGHFCN) are cytoplasmic. Residues 132–152 (LVGVSIVITFISVLAMATLSV) form a helical membrane-spanning segment. The Extracellular segment spans residues 153–177 (MSARRLFKTYGPERKQISSNDAPAI).

This sequence belongs to the Casparian strip membrane proteins (CASP) family. As to quaternary structure, homodimer and heterodimers.

The protein resides in the cell membrane. This Osmunda lancea (Fern) protein is CASP-like protein 2U1.